We begin with the raw amino-acid sequence, 494 residues long: Histidine--tRNA ligase (494 aa).

This sequence belongs to the class-II aminoacyl-tRNA synthetase family. Homodimer.

Its subcellular location is the cytoplasm. The enzyme catalyses tRNA(His) + L-histidine + ATP = L-histidyl-tRNA(His) + AMP + diphosphate + H(+). This is Histidine--tRNA ligase from Cereibacter sphaeroides (strain ATCC 17023 / DSM 158 / JCM 6121 / CCUG 31486 / LMG 2827 / NBRC 12203 / NCIMB 8253 / ATH 2.4.1.) (Rhodobacter sphaeroides).